Consider the following 1883-residue polypeptide: Zinc finger protein 106 (1883 aa).

Residues isoleucine 6 and lysine 37 each participate in a glycyl lysine isopeptide (Lys-Gly) (interchain with G-Cter in SUMO2) cross-link. The C2H2-type 1; atypical zinc-finger motif lies at 20–44; sequence HECRVCGVTEVGLSAYAKHISGQLH. Positions 39–162 are disordered; it reads ISGQLHKDNV…NGGGPRGRSG (124 aa). A compositionally biased stretch (acidic residues) spans 52-67; sequence EREDDGKGEEEEEDYF. Residues lysine 69 and lysine 76 each participate in a glycyl lysine isopeptide (Lys-Gly) (interchain with G-Cter in SUMO2) cross-link. Basic and acidic residues-rich tracts occupy residues 77–86, 96–116, and 128–138; these read QRKEQSRQDE, SDDR…DRES, and PQRDWKWEKDG. A Glycyl lysine isopeptide (Lys-Gly) (interchain with G-Cter in SUMO2) cross-link involves residue lysine 133. A compositionally biased stretch (polar residues) spans 139–148; sequence FNNTRKNSFP. Glycyl lysine isopeptide (Lys-Gly) (interchain with G-Cter in SUMO2) cross-links involve residues lysine 243, lysine 287, and lysine 305. Residues 322–338 show a composition bias toward polar residues; that stretch reads QTTKQADTATSKVSGKN. The interval 322–356 is disordered; it reads QTTKQADTATSKVSGKNGSAAREKPRRWTPYPSQK. Residues lysine 356, lysine 365, lysine 371, and lysine 417 each participate in a glycyl lysine isopeptide (Lys-Gly) (interchain with G-Cter in SUMO2) cross-link. The segment at 389-423 is disordered; sequence IQEPQTDETRNSPTQKTQKEIHTGSLNHKASSDSA. Positions 412 to 423 are enriched in polar residues; sequence GSLNHKASSDSA. Serine 422 is subject to Phosphoserine. Residues lysine 451, lysine 461, lysine 477, lysine 492, lysine 505, lysine 515, lysine 525, lysine 539, and lysine 557 each participate in a glycyl lysine isopeptide (Lys-Gly) (interchain with G-Cter in SUMO2) cross-link. Residues 457–501 form a disordered region; sequence CPATKSLSQKQDPKNISKNTKTNFFSPGEHSNPSNKPTVEDNHGP. The span at 461–493 shows a compositional bias: polar residues; sequence KSLSQKQDPKNISKNTKTNFFSPGEHSNPSNKP. The tract at residues 586–637 is disordered; that stretch reads LEDESDGETSDTEKHGTKIGTLGSATTELLSGSTRTADEKEEDDRILKTSRE. The residue at position 590 (serine 590) is a Phosphoserine. Lysine 603 is covalently cross-linked (Glycyl lysine isopeptide (Lys-Gly) (interchain with G-Cter in SUMO2)). Residues 608 to 620 show a composition bias toward polar residues; it reads GSATTELLSGSTR. Serine 641 and serine 661 each carry phosphoserine. Residues lysine 671, lysine 684, lysine 705, lysine 721, lysine 741, lysine 775, and lysine 807 each participate in a glycyl lysine isopeptide (Lys-Gly) (interchain with G-Cter in SUMO2) cross-link. Phosphoserine is present on residues serine 859, serine 861, serine 864, and serine 893. A disordered region spans residues 879–945; sequence EEGTGKENEP…HSAQLSSDHI (67 aa). Residues 888-906 show a composition bias toward polar residues; it reads PQQMVSPSNSLRAGQSQKA. Glycyl lysine isopeptide (Lys-Gly) (interchain with G-Cter in SUMO2) cross-links involve residues lysine 905 and lysine 911. A Phosphoserine modification is found at serine 937. Lysine 953 participates in a covalent cross-link: Glycyl lysine isopeptide (Lys-Gly) (interchain with G-Cter in SUMO2). Positions 958–976 are enriched in polar residues; the sequence is QERSIPPSENQNSQESNGE. Disordered regions lie at residues 958–982, 997–1048, 1121–1140, and 1182–1218; these read QERS…CLSS, ATDS…KERS, EPSE…RRNS, and PTFQ…VPPS. Threonine 1021 is modified (phosphothreonine). Phosphoserine occurs at positions 1025, 1026, and 1031. A compositionally biased stretch (basic residues) spans 1035–1045; sequence KNKRRKIKGKK. Phosphoserine is present on serine 1249. The segment at 1252 to 1483 is disordered; sequence ESTESFHEPS…EVSSTSEIGT (232 aa). Basic and acidic residues predominate over residues 1255 to 1277; sequence ESFHEPSQELKFSVEQRNTRNRE. A Glycyl lysine isopeptide (Lys-Gly) (interchain with G-Cter in SUMO2) cross-link involves residue lysine 1265. 2 stretches are compositionally biased toward polar residues: residues 1278 to 1291 and 1299 to 1312; these read NSPS…SSIN and KGNS…SSFL. 3 positions are modified to phosphoserine: serine 1279, serine 1281, and serine 1284. Residue lysine 1299 forms a Glycyl lysine isopeptide (Lys-Gly) (interchain with G-Cter in SUMO2) linkage. At serine 1302 the chain carries Phosphoserine. Lysine 1324 participates in a covalent cross-link: Glycyl lysine isopeptide (Lys-Gly) (interchain with G-Cter in SUMO2). The residue at position 1328 (serine 1328) is a Phosphoserine. Over residues 1333-1346 the composition is skewed to polar residues; it reads PEQQAESTLTSAET. Positions 1349–1362 are enriched in basic residues; that stretch reads SKKKKKLRKKKSLR. Phosphoserine is present on serine 1370. At threonine 1372 the chain carries Phosphothreonine. Glycyl lysine isopeptide (Lys-Gly) (interchain with G-Cter in SUMO2) cross-links involve residues lysine 1380, lysine 1392, and lysine 1395. Composition is skewed to basic and acidic residues over residues 1402–1416 and 1444–1456; these read EDSR…VRDE and GEEK…KKDI. A Glycyl lysine isopeptide (Lys-Gly) (interchain with G-Cter in SUMO2) cross-link involves residue lysine 1454. Residues 1457–1481 show a composition bias toward polar residues; sequence WNSTEQNPLETSRSGCDEVSSTSEI. Position 1468 is a phosphoserine (serine 1468). Residues lysine 1486 and lysine 1504 each participate in a glycyl lysine isopeptide (Lys-Gly) (interchain with G-Cter in SUMO2) cross-link. Positions 1502–1513 are enriched in polar residues; it reads SIKGSKNSSEIS. The interval 1502-1527 is disordered; sequence SIKGSKNSSEISSEPGDDDEPTEGSF. WD repeat units lie at residues 1529–1568, 1570–1611, 1654–1695, 1698–1737, 1738–1775, and 1778–1815; these read GHQA…GVFE, HTSK…CVEQ, HGPR…LLRT, GHSK…RIYK, GHNH…RLQV, and GHKD…NYRC. A Glycyl lysine isopeptide (Lys-Gly) (interchain with G-Cter in SUMO2) cross-link involves residue lysine 1585. A Glycyl lysine isopeptide (Lys-Gly) (interchain with G-Cter in SUMO2) cross-link involves residue lysine 1737. A C2H2-type 2; atypical zinc finger spans residues 1813–1838; it reads YRCWWHGCSLIFGVVDHLKQHLLTDH. Lysine 1864 participates in a covalent cross-link: Glycyl lysine isopeptide (Lys-Gly) (interchain with G-Cter in SUMO2).

Interacts with KNOP1. Interacts with TARDBP and NUP107. Interacts (via N-terminus) with RBM39. Interacts with the SH3 domains of FYN and GRB2. Phosphorylated by FYN in vitro.

The protein localises to the nucleus. Its subcellular location is the nucleolus. It is found in the nucleus speckle. RNA-binding protein. Specifically binds to 5'-GGGGCC-3' sequence repeats in RNA. Essential for maintenance of peripheral motor neuron and skeletal muscle function. Required for normal expression and/or alternative splicing of a number of genes in spinal cord and skeletal muscle, including the neurite outgrowth inhibitor RTN4. Also contributes to normal mitochondrial respiratory function in motor neurons, via an unknown mechanism. The chain is Zinc finger protein 106 (ZNF106) from Homo sapiens (Human).